Consider the following 434-residue polypeptide: Elongation factor 1-alpha (434 aa).

The region spanning 5–232 is the tr-type G domain; sequence KPHINLVVIG…DNVHPPKRPV (228 aa). The G1 stretch occupies residues 14-21; the sequence is GHVVAGKS. 14–21 is a binding site for GTP; that stretch reads GHVVAGKS. A G2 region spans residues 70-74; that stretch reads GITID. The segment at 91–94 is G3; that stretch reads DAPG. Residues 91 to 95 and 153 to 156 contribute to the GTP site; these read DAPGH and NKMD. Positions 153-156 are G4; sequence NKMD. Residues 196 to 198 are G5; sequence SGF.

The protein belongs to the TRAFAC class translation factor GTPase superfamily. Classic translation factor GTPase family. EF-Tu/EF-1A subfamily.

It localises to the cytoplasm. Its function is as follows. This protein promotes the GTP-dependent binding of aminoacyl-tRNA to the A-site of ribosomes during protein biosynthesis. The sequence is that of Elongation factor 1-alpha from Blastocystis hominis.